Reading from the N-terminus, the 305-residue chain is Type II secretion system protein C (305 aa).

At 1–29 the chain is on the cytoplasmic side; that stretch reads MEFKQLPPLAAWPRLLSQNTLRWQKPISE. Residues 30 to 50 form a helical membrane-spanning segment; the sequence is GLTLLLLVASAWTLGKMVWVV. Residues 51-305 are Periplasmic-facing; that stretch reads SAEQTPVPTW…GQQHDVYIQF (255 aa).

The protein belongs to the GSP C family.

Its subcellular location is the cell inner membrane. Functionally, involved in a type II secretion system (T2SS, formerly general secretion pathway, GSP) for the export of proteins. Required for secretion of cholera toxin through the outer membrane. The protein is Type II secretion system protein C (epsC) of Vibrio cholerae serotype O1 (strain ATCC 39315 / El Tor Inaba N16961).